Consider the following 97-residue polypeptide: Aspartyl/glutamyl-tRNA(Asn/Gln) amidotransferase subunit C (97 aa).

Belongs to the GatC family. Heterotrimer of A, B and C subunits.

It catalyses the reaction L-glutamyl-tRNA(Gln) + L-glutamine + ATP + H2O = L-glutaminyl-tRNA(Gln) + L-glutamate + ADP + phosphate + H(+). The enzyme catalyses L-aspartyl-tRNA(Asn) + L-glutamine + ATP + H2O = L-asparaginyl-tRNA(Asn) + L-glutamate + ADP + phosphate + 2 H(+). Allows the formation of correctly charged Asn-tRNA(Asn) or Gln-tRNA(Gln) through the transamidation of misacylated Asp-tRNA(Asn) or Glu-tRNA(Gln) in organisms which lack either or both of asparaginyl-tRNA or glutaminyl-tRNA synthetases. The reaction takes place in the presence of glutamine and ATP through an activated phospho-Asp-tRNA(Asn) or phospho-Glu-tRNA(Gln). In Roseiflexus sp. (strain RS-1), this protein is Aspartyl/glutamyl-tRNA(Asn/Gln) amidotransferase subunit C.